The primary structure comprises 777 residues: Intraflagellar transport protein 80 homolog (777 aa).

WD repeat units lie at residues 12-50, 104-143, 145-185, 186-225, 227-265, 267-306, and 504-542; these read KHQELVSCVGWTTAEELYSCSDDHQIVKWNLLTSETSLI, AHCGAVLAGRWNYEGTALVTVGEDGQVKIWSKTGMLRSTL, QQGT…LQWK, AHDGIILKVDWNSVNDLILSAGEDCKYKVWDSYGRVLYGS, PHEHPITSVAWAPDGELFAVGSFHTLRLCDKTGWSYALE, PNTGSIFNIAWSIDGTQIAGACGNGHVVFAHVVEQRWEWK, and KLGTMVHTLAWCDTCNILCGIQDTRFTVWYYPNTIYVDR.

As to quaternary structure, component of the IFT complex B, at least composed of IFT20, IFT22, IFT25, IFT27, IFT46, IFT52, TRAF3IP1/IFT54, IFT57, IFT74, IFT80, IFT81, and IFT88. Interacts with IFT88. Interacts with IFT57 and IFT70B.

It is found in the cytoplasm. It localises to the cytoskeleton. The protein resides in the cilium basal body. The protein localises to the cilium axoneme. Functionally, component of the intraflagellar transport (IFT) complex B, which is essential for the development and maintenance of motile and sensory cilia. The sequence is that of Intraflagellar transport protein 80 homolog (Ift80) from Mus musculus (Mouse).